Consider the following 523-residue polypeptide: Sensory neuron membrane protein 1 (523 aa).

The Cytoplasmic segment spans residues 1-11 (MQLPKELKYAA). A helical membrane pass occupies residues 12–32 (IAGGVALFGLIFGWVLFPTIL). Residues 33-458 (KSQLKKEMAL…HQLFIPKRVV (426 aa)) lie on the Extracellular side of the membrane. Asn-67 and Asn-229 each carry an N-linked (GlcNAc...) asparagine glycan. Intrachain disulfides connect Cys-268–Cys-333, Cys-297–Cys-352, and Cys-335–Cys-341. Asn-440 carries an N-linked (GlcNAc...) asparagine glycan. Residues 459–479 (GVLRWWVVSFGSLGAVIGIVF) traverse the membrane as a helical segment. Over 480–523 (HFRDHIMRLAVSGDTKVSKVTPEEPEQKDISVIGQAQEPAKVNI) the chain is Cytoplasmic.

It belongs to the CD36 family. As to expression, detected in sensory neurons in the antenna.

It is found in the cell membrane. Its function is as follows. Plays an olfactory role that is not restricted to pheromone sensitivity. The chain is Sensory neuron membrane protein 1 from Heliothis virescens (Tobacco budworm moth).